Here is a 364-residue protein sequence, read N- to C-terminus: Chorismate synthase (364 aa).

Arginine 47 provides a ligand contact to NADP(+). Residues 125–127 (RAS), glycine 288, 303–307 (KPTAT), and arginine 329 each bind FMN.

Belongs to the chorismate synthase family. As to quaternary structure, homotetramer. FMNH2 serves as cofactor.

It carries out the reaction 5-O-(1-carboxyvinyl)-3-phosphoshikimate = chorismate + phosphate. It participates in metabolic intermediate biosynthesis; chorismate biosynthesis; chorismate from D-erythrose 4-phosphate and phosphoenolpyruvate: step 7/7. In terms of biological role, catalyzes the anti-1,4-elimination of the C-3 phosphate and the C-6 proR hydrogen from 5-enolpyruvylshikimate-3-phosphate (EPSP) to yield chorismate, which is the branch point compound that serves as the starting substrate for the three terminal pathways of aromatic amino acid biosynthesis. This reaction introduces a second double bond into the aromatic ring system. This is Chorismate synthase from Synechococcus sp. (strain CC9605).